We begin with the raw amino-acid sequence, 455 residues long: GTPase Der (455 aa).

2 EngA-type G domains span residues 4-169 (PVVA…PPKS) and 178-353 (IQLA…EQHR). Residues 10–17 (GRPNVGKS), 57–61 (DTGGL), 120–123 (NKCE), 184–191 (GRPNVGKS), 231–235 (DTAGI), and 296–299 (NKWD) contribute to the GTP site. The region spanning 354 to 439 (RRVSTSVVNE…PLKLFWRGKQ (86 aa)) is the KH-like domain.

It belongs to the TRAFAC class TrmE-Era-EngA-EngB-Septin-like GTPase superfamily. EngA (Der) GTPase family. As to quaternary structure, associates with the 50S ribosomal subunit.

In terms of biological role, GTPase that plays an essential role in the late steps of ribosome biogenesis. The sequence is that of GTPase Der from Synechococcus sp. (strain WH7803).